The following is a 1150-amino-acid chain: Apomucin (1150 aa).

2 stretches are compositionally biased toward low complexity: residues Glu1 to Ser36 and Ser46 to Gly79. Repeat copies occupy residues Glu1–Arg44, Ile45–Arg125, Ile126–Arg206, Ile207–Arg287, and Ile288–Arg368. The segment at Glu1–Arg368 is 6 X 81 AA tandem repeats. 2 disordered regions span residues Glu1–Ile730 and Ala776–Leu925. O-linked (GalNAc...) serine; partial glycans are attached at residues Ser46, Ser50, Ser51, Ser57, Ser58, and Ser61. Thr66 is a glycosylation site (O-linked (GalNAc...) threonine; partial). Ser67 carries O-linked (GalNAc...) serine; partial glycosylation. Residues Thr73 and Thr74 are each glycosylated (O-linked (GalNAc...) threonine; partial). Ser76 and Ser77 each carry an O-linked (GalNAc...) serine; partial glycan. Residues Thr81 and Thr83 are each glycosylated (O-linked (GalNAc...) threonine; partial). The span at Pro86–Ser117 shows a compositional bias: low complexity. 2 O-linked (GalNAc...) serine; partial glycosylation sites follow: Ser87 and Ser91. O-linked (GalNAc...) threonine; partial glycosylation is found at Thr93, Thr94, and Thr96. O-linked (GalNAc...) serine; partial glycans are attached at residues Ser98, Ser101, and Ser103. Residue Thr104 is glycosylated (O-linked (GalNAc...) threonine; partial). O-linked (GalNAc...) serine; partial glycans are attached at residues Ser106, Ser107, Ser108, and Ser110. Thr114 is a glycosylation site (O-linked (GalNAc...) threonine; partial). O-linked (GalNAc...) serine; partial glycosylation is present at Ser117. O-linked (GalNAc...) threonine; partial glycosylation occurs at Thr123. Ser124 carries an O-linked (GalNAc...) serine; partial glycan. Composition is skewed to low complexity over residues Ser127 to Gly160, Pro167 to Ser198, Ser208 to Gly241, Pro248 to Ser279, Ser289 to Gly322, Pro329 to Ser360, and Ser370 to Ser396. The stretch at Ile369–Ser391 is one 6; truncated repeat. N-linked (GlcNAc...) asparagine glycosylation occurs at Asn418. Residues Ser442–Thr459 are compositionally biased toward polar residues. The span at Ser473–Thr506 shows a compositional bias: low complexity. Composition is skewed to polar residues over residues Val507 to Thr517 and Glu537 to Asn547. N-linked (GlcNAc...) asparagine glycosylation occurs at Asn547. Residues Ala548–Thr558 are compositionally biased toward low complexity. The segment covering Thr564 to Val586 has biased composition (polar residues). The span at Ala590 to Val625 shows a compositional bias: low complexity. 2 stretches are compositionally biased toward polar residues: residues Ala626 to Thr635 and Gly643 to Glu661. Residues Gly671–Thr682 are compositionally biased toward gly residues. Polar residues-rich tracts occupy residues Gln688 to Thr697, Leu706 to Gly729, and Ser779 to Thr788. Over residues Val790–Gly833 the composition is skewed to low complexity. Positions Glu875–Gly908 are enriched in polar residues. Residues Asn917, Asn985, Asn1002, and Asn1068 are each glycosylated (N-linked (GlcNAc...) asparagine). The 67-residue stretch at Pro929 to Glu995 folds into the VWFC domain. Cystine bridges form between Cys1062–Cys1109, Cys1076–Cys1123, Cys1085–Cys1139, and Cys1089–Cys1141. Positions Cys1062–Gln1146 constitute a CTCK domain.

As to quaternary structure, intermolecular disulfide bonds could help maintain a multimeric mucin structure. In terms of processing, extensively O-glycosylated on most but not all Ser and Thr residues of the repeat units. Highest glycosylation appears to occur on Ser residues which have Gly at positions at +2 or -2 from the glycosylation site or, where Gly is the penultimate residue. The presence of proline (usually at position +3 or -3) appears to also enhance glycosylation. Submaxillary mucosae.

It is found in the secreted. Functionally, apomucin is part of mucin, the major glycoprotein synthesized and secreted by mucous cells of the submaxillary gland. Its highly viscous aqueous solutions serve to lubricate the oral cavity and to protect it from the external environment. This chain is Apomucin, found in Sus scrofa (Pig).